Here is a 163-residue protein sequence, read N- to C-terminus: Large ribosomal subunit protein uL11 (163 aa).

Positions 1-26 (MAETIEVLVAGGQADPGPPLGPELGP) are disordered.

It belongs to the universal ribosomal protein uL11 family. As to quaternary structure, part of the ribosomal stalk of the 50S ribosomal subunit. Interacts with L10 and the large rRNA to form the base of the stalk. L10 forms an elongated spine to which L12 dimers bind in a sequential fashion forming a multimeric L10(L12)X complex.

Its function is as follows. Forms part of the ribosomal stalk which helps the ribosome interact with GTP-bound translation factors. The chain is Large ribosomal subunit protein uL11 from Halobacterium salinarum (strain ATCC 29341 / DSM 671 / R1).